Reading from the N-terminus, the 417-residue chain is Probable uracil permease (417 aa).

Topologically, residues 1–13 (MTNQNPPVLLEQN) are cytoplasmic. A helical membrane pass occupies residues 14–37 (HAKQAFVGLQMLFVAFGALVLVPL). Topologically, residues 38–41 (ITGL) are periplasmic. A helical transmembrane segment spans residues 42–61 (NANTALLTAGIGTLLFQLCT). Over 62–64 (GRQ) the chain is Cytoplasmic. Residues 65–81 (VPIFLASSFAFIAPIQY) form a discontinuously helical membrane-spanning segment. Residue Phe73 participates in uracil binding. Over 83 to 90 (VTTWGIAT) the chain is Periplasmic. Residues 91–111 (TMGGLVFTGLVYFALSTLVKI) traverse the membrane as a helical segment. The Cytoplasmic portion of the chain corresponds to 112 to 123 (KGAGALQKVFPP). A helical membrane pass occupies residues 124–145 (VVVGPVIIIIGMGLAPVAVDMA). Over 146–154 (LGKNSTYQY) the chain is Periplasmic. The helical transmembrane segment at 155–170 (NDAVFVSMATLLTTLG) threads the bilayer. The Cytoplasmic portion of the chain corresponds to 171 to 177 (VAVFAKG). The helical transmembrane segment at 178 to 198 (MMKLIPIMFGIVVGYILCLFL) threads the bilayer. The Periplasmic segment spans residues 199-223 (GLINFQPVIDAPWFSVPEITTPEFK). The helical transmembrane segment at 224 to 247 (LEAILYLLPIAIAPAVEHVGGIMA) threads the bilayer. Residue Glu240 participates in uracil binding. Topologically, residues 248–260 (ISSVTGKDFLQKP) are cytoplasmic. A helical membrane pass occupies residues 261-280 (GLHRTLLGDGIATSAASFLG). A discontinuously helical membrane pass occupies residues 281 to 297 (GPPNTTYAEVTGAVMLT). Glu289 contacts uracil. Topologically, residues 298–300 (RNF) are cytoplasmic. A helical membrane pass occupies residues 301 to 318 (NPKIMTWAAVWAIAISFC). Topologically, residues 319–331 (GKVGAFLSTIPTI) are periplasmic. A helical transmembrane segment spans residues 332–353 (VMGGIMMLVFGSIAVVGMSTLI). Residues 354 to 364 (RGKVDVTEARN) lie on the Cytoplasmic side of the membrane. Positions 365-400 (LCIISVVMTFGIGGMFVNFGEVSLKGISLCAVVAIL) form an intramembrane region, discontinuously helical. The Cytoplasmic segment spans residues 401–416 (LNLILPKAKNTPIEEN).

This sequence belongs to the nucleobase:cation symporter-2 (NCS2) (TC 2.A.40) family.

It localises to the cell inner membrane. The enzyme catalyses uracil(in) + H(+)(in) = uracil(out) + H(+)(out). Transport of uracil in the cell. The chain is Probable uracil permease (uraA) from Pasteurella multocida (strain Pm70).